An 87-amino-acid chain; its full sequence is Precursor of CEP8 (87 aa).

The signal sequence occupies residues 1 to 29 (MAKALFFNFCISLLIIAILVSHEIIPTEA). Residues 30-72 (RHLRTHRKSIKNSTLTVHEGAGGLRTGGGSVKTDISKEEHGVD) constitute a propeptide that is removed on maturation. Asparagine 41 carries an N-linked (GlcNAc...) asparagine glycan. The disordered stretch occupies residues 41–87 (NSTLTVHEGAGGLRTGGGSVKTDISKEEHGVDEFRPTTPGNSPGIGH). Residues 49–59 (GAGGLRTGGGS) are compositionally biased toward gly residues. A compositionally biased stretch (basic and acidic residues) spans 63-75 (DISKEEHGVDEFR). Hydroxyproline is present on residues proline 76, proline 79, and proline 83.

This sequence belongs to the C-terminally encoded plant signaling peptide (CEP) family. In terms of assembly, interacts with CEP receptors (e.g. CEPR1 and CEPR2). In terms of processing, the mature small signaling peptide is generated by proteolytic processing of the longer precursor. Expressed in lateral root primordia and in lateral roots excluding the meristem region. Also present in the aerial tissues, such as leaf petioles and the shoot apex region.

It localises to the secreted. The protein resides in the extracellular space. Its subcellular location is the apoplast. In terms of biological role, extracellular signaling peptide that may regulate primary root growth rate and systemic nitrogen (N)-demand signaling. Mediates up-regulation of genes involved in N uptake and assimilation pathways. This is Precursor of CEP8 from Arabidopsis thaliana (Mouse-ear cress).